Consider the following 319-residue polypeptide: Large ribosomal subunit protein uL10 (319 aa).

The tract at residues 286–319 (AGDSGASAAPKEEEKAAEPEEESDEEMGFSLFDD) is disordered. Residues 304-319 (PEEESDEEMGFSLFDD) show a composition bias toward acidic residues.

It belongs to the universal ribosomal protein uL10 family. P0 forms a pentameric complex by interaction with dimers of P1 and P2. Post-translationally, phosphorylated.

Ribosomal protein P0 is the functional equivalent of E.coli protein L10. The protein is Large ribosomal subunit protein uL10 (RP-P0) of Zea mays (Maize).